The following is a 23-amino-acid chain: M-poneritoxin-Nc1a (23 aa).

It belongs to the non-disulfide-bridged peptide (NDBP) superfamily. Medium-length antimicrobial peptide (group 3) family. Ponericin-W subfamily. In terms of tissue distribution, expressed by the venom gland.

The protein resides in the secreted. It is found in the target cell membrane. Membrane-perturbating peptide with multiple activities. It is insecticidal, since it induces contractile paralysis in insects (L.cuprina) during several hours, and death after 24 hours. It shows antibacterial activity with higher activity against Gram-positive than Gram-negative bacteria. It is also antiparasitic, since it potently inhibits the larval development of the major pathogenic nematode of ruminants (H.contortus, IC(50)=5.1 uM), but fails to reduce the motility of adult males of the other nematode B.malayi. It also shows cytotoxic activity against HEK293 cells (EC(50)=12-14 uM) and induces hemolysis in human erythrocytes (EC(50)=28.6-48.2 uM). In addition, it causes an important increase in intracellular calcium concentration on neuronal and epithelial cell lines, which supports a non-specific membrane perturbation mechanism of action. In vivo, it induces pain by intraplantar injection into mice, suggesting a defensive function against vertebrate predators. The chain is M-poneritoxin-Nc1a from Neoponera commutata (Large hunting ant).